The sequence spans 244 residues: Mannose-binding protein C (244 aa).

The signal sequence occupies residues 1–18 (MSLFTSFLLLCVLTAVYA). Residues 38–96 (GLNGFPGKDGHDGAKGEKGEPGQGLRGLQGPPGKVGPAGPPGNPGSKGATGPKGDRGES) enclose the Collagen-like domain. Position 43 is a 4-hydroxyproline (P43). Positions 43–99 (PGKDGHDGAKGEKGEPGQGLRGLQGPPGKVGPAGPPGNPGSKGATGPKGDRGESVEF) are disordered. Over residues 45–57 (KDGHDGAKGEKGE) the composition is skewed to basic and acidic residues. A 4-hydroxyproline mark is found at P58, P69, P78, and P81. Residues 65 to 74 (LQGPPGKVGP) show a composition bias toward low complexity. Positions 108-126 (IAALRSELRAMRKWVLLSM) form a coiled coil. In terms of domain architecture, C-type lectin spans 129–241 (NVGKKYFMSS…CSDSFLVVCE (113 aa)). 2 cysteine pairs are disulfide-bonded: C151/C240 and C218/C232.

In terms of assembly, oligomeric complex of 3 or more homotrimers. Interacts with MASP1 and MASP2. Interacts with MEP1A and MEP1B and may inhibit their catalytic activity.

Its subcellular location is the secreted. Its function is as follows. Calcium-dependent lectin involved in innate immune defense. Binds mannose, fucose and N-acetylglucosamine on different microorganisms and activates the lectin complement pathway. Binds to late apoptotic cells, as well as to apoptotic blebs and to necrotic cells, but not to early apoptotic cells, facilitating their uptake by macrophages. This is Mannose-binding protein C (Mbl2) from Rattus norvegicus (Rat).